A 350-amino-acid chain; its full sequence is MESAFIIEKSVVIVVVFAVTMIMAMYSTWAERKVAAFLQDRVGPNRAGWGGLLQPLADGMKLFSKEEFFPNTPNRFLFVVGPAIAMSTALMTSAVIPWGDRLHLFGKDIILQATDVNIALLYIFGVLSVGVYGIMIGGWASNNKFSLMGAVRAASQMVSYEIAMGLSMIALLMMTGTMSLKVISEQQAGMNWNVFYQPLSFLIFLICSFAETNRTPFDLAECENELIGGYHTEYSSMKMGFYLFAEYASMFISSTIISVLFFGGYNYPGMQWMVDNVGVNTANLLGIAVLFVKICFFIFFYMWVRWTIPRFRYDQLMNLGWRILIPLSIINIMITGAVILRHDIAAALGF.

8 consecutive transmembrane segments (helical) span residues 5-25 (FIIEKSVVIVVVFAVTMIMAM), 76-96 (FLFVVGPAIAMSTALMTSAVI), 118-138 (IALLYIFGVLSVGVYGIMIGG), 162-182 (IAMGLSMIALLMMTGTMSLKV), 190-210 (MNWNVFYQPLSFLIFLICSFA), 243-263 (LFAEYASMFISSTIISVLFFG), 284-304 (LLGIAVLFVKICFFIFFYMWV), and 319-339 (LGWRILIPLSIINIMITGAVI).

It belongs to the complex I subunit 1 family. In terms of assembly, NDH-1 is composed of 14 different subunits. Subunits NuoA, H, J, K, L, M, N constitute the membrane sector of the complex.

It localises to the cell inner membrane. It carries out the reaction a quinone + NADH + 5 H(+)(in) = a quinol + NAD(+) + 4 H(+)(out). NDH-1 shuttles electrons from NADH, via FMN and iron-sulfur (Fe-S) centers, to quinones in the respiratory chain. The immediate electron acceptor for the enzyme in this species is believed to be ubiquinone. Couples the redox reaction to proton translocation (for every two electrons transferred, four hydrogen ions are translocated across the cytoplasmic membrane), and thus conserves the redox energy in a proton gradient. This subunit may bind ubiquinone. The chain is NADH-quinone oxidoreductase subunit H from Flavobacterium johnsoniae (strain ATCC 17061 / DSM 2064 / JCM 8514 / BCRC 14874 / CCUG 350202 / NBRC 14942 / NCIMB 11054 / UW101) (Cytophaga johnsonae).